Here is a 185-residue protein sequence, read N- to C-terminus: Probable RNA polymerase sigma-C factor (185 aa).

The Polymerase core binding signature appears at 52–65 (DLTQETFLRAIGAI). Residues 149–168 (YADAAAVCGCPVGTIRSRVA) constitute a DNA-binding region (H-T-H motif).

The protein belongs to the sigma-70 factor family. ECF subfamily.

Functionally, sigma factors are initiation factors that promote the attachment of RNA polymerase to specific initiation sites and are then released. The chain is Probable RNA polymerase sigma-C factor (sigC) from Mycobacterium bovis (strain ATCC BAA-935 / AF2122/97).